We begin with the raw amino-acid sequence, 261 residues long: Cytochrome c oxidase subunit 3 (261 aa).

Over 1-15 (MAHQAHAYHMVDPSP) the chain is Mitochondrial matrix. A helical membrane pass occupies residues 16–34 (WPLTGAIAALLLTSGTAVW). At 35–40 (FHFHSL) the chain is on the mitochondrial intermembrane side. Residues 41 to 66 (TLLTMGNILLLLTMYQWWRDIIREGT) traverse the membrane as a helical segment. Topologically, residues 67 to 72 (FQGHHT) are mitochondrial matrix. A helical membrane pass occupies residues 73-105 (PPVQKGLRYGMILFITSEVFFFLGFFWAFYHSS). Over 106–128 (LSPTPELGGCWPPTGIITLDPFE) the chain is Mitochondrial intermembrane. Residues 129–152 (VPLLNTAVLLASGVTVTWAHHSIM) form a helical membrane-spanning segment. At 153 to 155 (EGE) the chain is on the mitochondrial matrix side. The chain crosses the membrane as a helical span at residues 156–183 (RKQTIQALTLTILLGFYFTFLQGMEYYE). The Mitochondrial intermembrane portion of the chain corresponds to 184–190 (APFTIAD). A helical membrane pass occupies residues 191–223 (GVYGSTFFVATGFHGLHVIIGSTFLAICLLRQI). At 224-232 (QYHFTSEHH) the chain is on the mitochondrial matrix side. Residues 233-256 (FGFEAAAWYWHFVDVVWLFLYVSI) form a helical membrane-spanning segment. Residues 257–261 (YWWGS) are Mitochondrial intermembrane-facing.

This sequence belongs to the cytochrome c oxidase subunit 3 family. As to quaternary structure, component of the cytochrome c oxidase (complex IV, CIV), a multisubunit enzyme composed of 14 subunits. The complex is composed of a catalytic core of 3 subunits MT-CO1, MT-CO2 and MT-CO3, encoded in the mitochondrial DNA, and 11 supernumerary subunits COX4I, COX5A, COX5B, COX6A, COX6B, COX6C, COX7A, COX7B, COX7C, COX8 and NDUFA4, which are encoded in the nuclear genome. The complex exists as a monomer or a dimer and forms supercomplexes (SCs) in the inner mitochondrial membrane with NADH-ubiquinone oxidoreductase (complex I, CI) and ubiquinol-cytochrome c oxidoreductase (cytochrome b-c1 complex, complex III, CIII), resulting in different assemblies (supercomplex SCI(1)III(2)IV(1) and megacomplex MCI(2)III(2)IV(2)).

The protein resides in the mitochondrion inner membrane. It carries out the reaction 4 Fe(II)-[cytochrome c] + O2 + 8 H(+)(in) = 4 Fe(III)-[cytochrome c] + 2 H2O + 4 H(+)(out). Functionally, component of the cytochrome c oxidase, the last enzyme in the mitochondrial electron transport chain which drives oxidative phosphorylation. The respiratory chain contains 3 multisubunit complexes succinate dehydrogenase (complex II, CII), ubiquinol-cytochrome c oxidoreductase (cytochrome b-c1 complex, complex III, CIII) and cytochrome c oxidase (complex IV, CIV), that cooperate to transfer electrons derived from NADH and succinate to molecular oxygen, creating an electrochemical gradient over the inner membrane that drives transmembrane transport and the ATP synthase. Cytochrome c oxidase is the component of the respiratory chain that catalyzes the reduction of oxygen to water. Electrons originating from reduced cytochrome c in the intermembrane space (IMS) are transferred via the dinuclear copper A center (CU(A)) of subunit 2 and heme A of subunit 1 to the active site in subunit 1, a binuclear center (BNC) formed by heme A3 and copper B (CU(B)). The BNC reduces molecular oxygen to 2 water molecules using 4 electrons from cytochrome c in the IMS and 4 protons from the mitochondrial matrix. In Salmo salar (Atlantic salmon), this protein is Cytochrome c oxidase subunit 3 (mt-co3).